The following is a 371-amino-acid chain: Ferrochelatase (371 aa).

The Fe cation site is built by His218 and Glu299.

This sequence belongs to the ferrochelatase family.

It is found in the cytoplasm. The catalysed reaction is heme b + 2 H(+) = protoporphyrin IX + Fe(2+). The protein operates within porphyrin-containing compound metabolism; protoheme biosynthesis; protoheme from protoporphyrin-IX: step 1/1. In terms of biological role, catalyzes the ferrous insertion into protoporphyrin IX. The sequence is that of Ferrochelatase from Cupriavidus metallidurans (strain ATCC 43123 / DSM 2839 / NBRC 102507 / CH34) (Ralstonia metallidurans).